A 1155-amino-acid chain; its full sequence is Eukaryotic translation initiation factor 3 subunit A (1155 aa).

The region spanning Leu-319–Thr-502 is the PCI domain. Disordered stretches follow at residues Gln-589 to Gln-613 and Ala-836 to Arg-1155. Basic and acidic residues-rich tracts occupy residues Ala-836–Asp-900, Asp-925–Ser-987, Ser-1004–Pro-1057, and Asp-1066–Lys-1101. The segment covering Gly-1104 to Asn-1118 has biased composition (gly residues). The segment covering Pro-1125–Asp-1145 has biased composition (basic and acidic residues).

It belongs to the eIF-3 subunit A family. Component of the eukaryotic translation initiation factor 3 (eIF-3) complex. The eIF-3 complex interacts with pix.

The protein resides in the cytoplasm. RNA-binding component of the eukaryotic translation initiation factor 3 (eIF-3) complex, which is involved in protein synthesis of a specialized repertoire of mRNAs and, together with other initiation factors, stimulates binding of mRNA and methionyl-tRNAi to the 40S ribosome. The eIF-3 complex specifically targets and initiates translation of a subset of mRNAs involved in cell proliferation. The chain is Eukaryotic translation initiation factor 3 subunit A from Drosophila pseudoobscura pseudoobscura (Fruit fly).